Reading from the N-terminus, the 858-residue chain is Piwi-like protein 1 (858 aa).

The span at 1–13 shows a compositional bias: basic residues; the sequence is MTGRARARSRGRG. A disordered region spans residues 1–56; that stretch reads MTGRARARSRGRGRGQEPAAPGAQPPVSQEAAKPVVSTPSEGQLVGRGRQKPAPGA. The segment covering 16–26 has biased composition (low complexity); sequence QEPAAPGAQPP. Residues 276 to 388 form the PAZ domain; sequence TVLDFMYSLR…LVPEFCYLTG (113 aa). The interval 314–316 is required for binding 2'-O-methylated 3'-end of piRNAs; that stretch reads TYR. The segment at 476–612 is MID region; the sequence is SKEMRGLPLI…LQMNCKMGGE (137 aa). The 293-residue stretch at 552 to 844 folds into the Piwi domain; that stretch reads MVVVILPTNR…LAFLVGQSIH (293 aa). Catalysis depends on residues Asp-629, Glu-667, Asp-699, and His-833.

Belongs to the argonaute family. Piwi subfamily. Requires Mg(2+) as cofactor. In terms of processing, methylated on arginine residues; required for the interaction with Tudor domain-containing protein and subsequent localization to the meiotic nuage, also named P granule. In terms of tissue distribution, expressed exclusively in the adult gonads; expression in the ovary weaker than in the testis (at protein level). During neurogenesis and organogenesis, expression is detected in CNS (midbrain and eye) and fin buds. Starting from 24 hours post-fertilization, expression is found in the genital ridge.

Its subcellular location is the cytoplasm. Plays a central role during gametogenesis by repressing transposable elements and preventing their mobilization, which is essential for the germline integrity. Acts via the piRNA metabolic process, which mediates the repression of transposable elements during meiosis by forming complexes composed of piRNAs and Piwi proteins and governs the methylation and subsequent repression of transposons. Directly binds methylated piRNAs, a class of 24 to 30 nucleotide RNAs that are generated by a Dicer-independent mechanism and are primarily derived from transposons and other repeated sequence elements. Has a strong preference for piRNAs with a uridine nucleotide at their 5'-end (g1U preference, also named 1U-bias) and binds piRNAs in an opposite direction compared to piwil2/zili. Participates in a piRNA amplification loop with piwil2/zili. Not involved in the piRNA amplification loop, also named ping-pong amplification cycle. Acts as an endoribonuclease that cleaves transposon messenger RNAs. The chain is Piwi-like protein 1 (piwil1) from Danio rerio (Zebrafish).